A 315-amino-acid chain; its full sequence is Prephenate dehydratase (315 aa).

The Prephenate dehydratase domain maps to 3–189 (RIAYLGPEGT…ARTRFVLVGP (187 aa)). The 78-residue stretch at 203-280 (SVVLRIDNAP…ADVRYLGSWP (78 aa)) folds into the ACT domain.

Homodimer.

It carries out the reaction prephenate + H(+) = 3-phenylpyruvate + CO2 + H2O. The protein operates within amino-acid biosynthesis; L-phenylalanine biosynthesis; phenylpyruvate from prephenate: step 1/1. The polypeptide is Prephenate dehydratase (pheA) (Mycobacterium avium (strain 104)).